Reading from the N-terminus, the 274-residue chain is NADPH-dependent 7-cyano-7-deazaguanine reductase (274 aa).

80-82 (VES) contacts substrate. 82–83 (SK) lines the NADPH pocket. Residue C181 is the Thioimide intermediate of the active site. The active-site Proton donor is the D188. 220 to 221 (HE) contacts substrate. 249 to 250 (RG) lines the NADPH pocket.

This sequence belongs to the GTP cyclohydrolase I family. QueF type 2 subfamily. Homodimer.

The protein resides in the cytoplasm. It catalyses the reaction 7-aminomethyl-7-carbaguanine + 2 NADP(+) = 7-cyano-7-deazaguanine + 2 NADPH + 3 H(+). It participates in tRNA modification; tRNA-queuosine biosynthesis. Its function is as follows. Catalyzes the NADPH-dependent reduction of 7-cyano-7-deazaguanine (preQ0) to 7-aminomethyl-7-deazaguanine (preQ1). This is NADPH-dependent 7-cyano-7-deazaguanine reductase from Burkholderia ambifaria (strain MC40-6).